The primary structure comprises 91 residues: Acylphosphatase (91 aa).

Positions 5–91 (RLTAWVRGHV…RGSFTGFEER (87 aa)) constitute an Acylphosphatase-like domain. Active-site residues include Arg-20 and Asn-38.

The protein belongs to the acylphosphatase family.

The catalysed reaction is an acyl phosphate + H2O = a carboxylate + phosphate + H(+). The polypeptide is Acylphosphatase (acyP) (Thermobifida fusca (strain YX)).